The primary structure comprises 448 residues: Mitochondrial distribution and morphology protein 10 (448 aa).

The protein belongs to the MDM10 family. Component of the ER-mitochondria encounter structure (ERMES) or MDM complex, composed of MMM1, MDM10, MDM12 and MDM34. Associates with the mitochondrial outer membrane sorting assembly machinery SAM(core) complex.

The protein resides in the mitochondrion outer membrane. Functionally, component of the ERMES/MDM complex, which serves as a molecular tether to connect the endoplasmic reticulum and mitochondria. Components of this complex are involved in the control of mitochondrial shape and protein biogenesis and may function in phospholipid exchange. MDM10 is involved in the late assembly steps of the general translocase of the mitochondrial outer membrane (TOM complex). Functions in the TOM40-specific route of the assembly of outer membrane beta-barrel proteins, including the association of TOM40 with the receptor TOM22 and small TOM proteins. Can associate with the SAM(core) complex as well as the MDM12-MMM1 complex, both involved in late steps of the major beta-barrel assembly pathway, that is responsible for biogenesis of all outer membrane beta-barrel proteins. May act as a switch that shuttles between both complexes and channels precursor proteins into the TOM40-specific pathway. Plays a role in mitochondrial morphology and in the inheritance of mitochondria. This Zygosaccharomyces rouxii (strain ATCC 2623 / CBS 732 / NBRC 1130 / NCYC 568 / NRRL Y-229) protein is Mitochondrial distribution and morphology protein 10.